Consider the following 435-residue polypeptide: GTPase Obg (435 aa).

The Obg domain maps to 6 to 164; the sequence is ADFVDRVKIF…RWLELELKIL (159 aa). Residues 165 to 335 form the OBG-type G domain; sequence ADVGLVGYPN…LVSKLASIVR (171 aa). Residues 171 to 178, 196 to 200, 217 to 220, 287 to 290, and 316 to 318 each bind GTP; these read GYPNVGKS, FTTLI, DIPG, NKID, and SAL. S178 and T198 together coordinate Mg(2+). The OCT domain maps to 357 to 435; it reads RRLPEKFHLE…IGDFEFEYRE (79 aa).

This sequence belongs to the TRAFAC class OBG-HflX-like GTPase superfamily. OBG GTPase family. Monomer. Mg(2+) is required as a cofactor.

The protein localises to the cytoplasm. Functionally, an essential GTPase which binds GTP, GDP and possibly (p)ppGpp with moderate affinity, with high nucleotide exchange rates and a fairly low GTP hydrolysis rate. Plays a role in control of the cell cycle, stress response, ribosome biogenesis and in those bacteria that undergo differentiation, in morphogenesis control. This is GTPase Obg from Thermotoga sp. (strain RQ2).